The primary structure comprises 86 residues: Small ribosomal subunit protein uS17 (86 aa).

The protein belongs to the universal ribosomal protein uS17 family. In terms of assembly, part of the 30S ribosomal subunit.

Functionally, one of the primary rRNA binding proteins, it binds specifically to the 5'-end of 16S ribosomal RNA. In Shouchella clausii (strain KSM-K16) (Alkalihalobacillus clausii), this protein is Small ribosomal subunit protein uS17.